The sequence spans 339 residues: MKEKLEAIKEKALNELKSAVDKKNIEEIRVKYLGKKGELTQILRGMGALSSEERPIIGKLANEVRSKLESLIVEASEKIKDAEKKTRLESEIIDISMPGKRQTIGHRHPTYLTLNKVENIFRDMGFVIEEGPEVEYDKYNFEMLNIPKNHPARGEQDTFYINDNVVLRTQTSPVQVRTMLNQKPPIKMISPGKVYRSDAADATHSPIFYQVEGLVVDKGITFADLKGTLETFAKKMFGENVKMKFRPHHFPFTEPSAESDVTCFACGGEGCRVCKGEGWIELWGCGMVHPNVLRNCGIDPEVYSGFAFGMGLDRIVMLNYGIDDIRQLYESDMRFLKQF.

Glu254 contributes to the Mg(2+) binding site.

The protein belongs to the class-II aminoacyl-tRNA synthetase family. Phe-tRNA synthetase alpha subunit type 1 subfamily. In terms of assembly, tetramer of two alpha and two beta subunits. Mg(2+) is required as a cofactor.

It is found in the cytoplasm. The catalysed reaction is tRNA(Phe) + L-phenylalanine + ATP = L-phenylalanyl-tRNA(Phe) + AMP + diphosphate + H(+). The protein is Phenylalanine--tRNA ligase alpha subunit of Clostridium acetobutylicum (strain ATCC 824 / DSM 792 / JCM 1419 / IAM 19013 / LMG 5710 / NBRC 13948 / NRRL B-527 / VKM B-1787 / 2291 / W).